The primary structure comprises 280 residues: Putative pyruvate, phosphate dikinase regulatory protein (280 aa).

147–154 provides a ligand contact to ADP; the sequence is GASRSSKT.

The protein belongs to the pyruvate, phosphate/water dikinase regulatory protein family. PDRP subfamily.

The catalysed reaction is N(tele)-phospho-L-histidyl/L-threonyl-[pyruvate, phosphate dikinase] + ADP = N(tele)-phospho-L-histidyl/O-phospho-L-threonyl-[pyruvate, phosphate dikinase] + AMP + H(+). It carries out the reaction N(tele)-phospho-L-histidyl/O-phospho-L-threonyl-[pyruvate, phosphate dikinase] + phosphate + H(+) = N(tele)-phospho-L-histidyl/L-threonyl-[pyruvate, phosphate dikinase] + diphosphate. Bifunctional serine/threonine kinase and phosphorylase involved in the regulation of the pyruvate, phosphate dikinase (PPDK) by catalyzing its phosphorylation/dephosphorylation. This Pelobacter propionicus (strain DSM 2379 / NBRC 103807 / OttBd1) protein is Putative pyruvate, phosphate dikinase regulatory protein.